Here is a 124-residue protein sequence, read N- to C-terminus: MPTIQQLIRSQRIKCETKTKSPALKACPQRRGICTRVYTTTPKKPNSALRKVARVRLTTGIEVTAYIPGIGHNLQEHSVVLVRGGRVKDLPGVRYHIVRGSLDTAGVKDRLQSRSKYGVKRPKS.

This sequence belongs to the universal ribosomal protein uS12 family. As to quaternary structure, part of the 30S ribosomal subunit.

It is found in the plastid. It localises to the chloroplast. Functionally, with S4 and S5 plays an important role in translational accuracy. Located at the interface of the 30S and 50S subunits. The protein is Small ribosomal subunit protein uS12c (rps12) of Ostreococcus tauri.